The primary structure comprises 388 residues: Lipid-A-disaccharide synthase (388 aa).

It belongs to the LpxB family.

It carries out the reaction a lipid X + a UDP-2-N,3-O-bis[(3R)-3-hydroxyacyl]-alpha-D-glucosamine = a lipid A disaccharide + UDP + H(+). Its pathway is bacterial outer membrane biogenesis; LPS lipid A biosynthesis. Its function is as follows. Condensation of UDP-2,3-diacylglucosamine and 2,3-diacylglucosamine-1-phosphate to form lipid A disaccharide, a precursor of lipid A, a phosphorylated glycolipid that anchors the lipopolysaccharide to the outer membrane of the cell. This is Lipid-A-disaccharide synthase from Saccharophagus degradans (strain 2-40 / ATCC 43961 / DSM 17024).